Consider the following 197-residue polypeptide: Holliday junction branch migration complex subunit RuvA (197 aa).

The segment at 1–64 is domain I; it reads MIGRLRGIVA…EDSVSLYGFL (64 aa). The interval 65–143 is domain II; that stretch reads REGERRLFRD…QFGAGGALPT (79 aa). Positions 144-153 are flexible linker; the sequence is GSGPAPADPL. Residues 153–197 form a domain III region; sequence LSDATVALQQLGYKPAEAARMARDAFNEGDEVATVIRKALQSALR.

The protein belongs to the RuvA family. In terms of assembly, homotetramer. Forms an RuvA(8)-RuvB(12)-Holliday junction (HJ) complex. HJ DNA is sandwiched between 2 RuvA tetramers; dsDNA enters through RuvA and exits via RuvB. An RuvB hexamer assembles on each DNA strand where it exits the tetramer. Each RuvB hexamer is contacted by two RuvA subunits (via domain III) on 2 adjacent RuvB subunits; this complex drives branch migration. In the full resolvosome a probable DNA-RuvA(4)-RuvB(12)-RuvC(2) complex forms which resolves the HJ.

The protein localises to the cytoplasm. In terms of biological role, the RuvA-RuvB-RuvC complex processes Holliday junction (HJ) DNA during genetic recombination and DNA repair, while the RuvA-RuvB complex plays an important role in the rescue of blocked DNA replication forks via replication fork reversal (RFR). RuvA specifically binds to HJ cruciform DNA, conferring on it an open structure. The RuvB hexamer acts as an ATP-dependent pump, pulling dsDNA into and through the RuvAB complex. HJ branch migration allows RuvC to scan DNA until it finds its consensus sequence, where it cleaves and resolves the cruciform DNA. In Stenotrophomonas maltophilia (strain K279a), this protein is Holliday junction branch migration complex subunit RuvA.